The following is a 1220-amino-acid chain: MNPSELRMMWMSSQYNSERITLEDAATLLGHPTVGLSVMEDLSAHQPTLDMNPMMSLMGGDFTGQAAATAAALGVQPGTLIATNSNNLYGFAHMGGLQQQLLQQSAAAAVFQNYAEAMDNDVENGMVGMAMEAVVDDDDQVYGQRDNNFDDNGSELEPKQEIINIDDFVMMNEDNNSYDGTDFMTSSDKDISQSSSSCMAQMPGSLGVPGVEHDLLVPLPDGLLHHKLLGTTLVPAMGTLNGNAFGNIMVSTENTSSKQMQRTYSTAKGANSTATTATCSASTSSALRSQRKTRKIEPVNRPGLVLKTPIAYRGNIDPSVIPIQKDGMAVCKRCGAIGVKHTFYTKSRRFCSMACARGELYSLVLNTKMEGDQATTSSPDPGAGSESADLPGDQQQSQSDIELDLHAAHIKNANYRFRITDQSKITQLNSFGEPMSMGGDAAANNVQMAADETIAALNGGAVGDATAPGSTEEGASTPNSYLSAAPTPKALRLFKDIYPQDDLPQIPKYERLPVPCPQMEKIISIRRRMYDPTHSYDWLPRLSKENFNAAPVTCFPHAPGCEVWDNLGVGMKVEVENTDCDSIEVIQPGQTPTSFWVATILEIKGYKALMSYEGFDTDSHDFWVNLCNAEVHSVGWCATRGKPLIPPRTIEHKYKDWKDFLVGRLSGARTLPSNFYNKINDSLQSRFRLGLNLECVDKDRISQVRLATVTKIVGKRLFLRYFDSDDGFWCHEDSPIIHPVGWATTVGHNLAAPQDYLERMLAGREAMIEVHEDDATIELFKMNFTFDEYYSDGKTNSFVEGMKLEAVDPLNLSSICPATVMAVLKFGYMMIRIDSYQPDASGSDWFCYHEKSPCIFPAGFCSVNNISVTPPNGYDSRTFTWEGYLRDTGAVAAGQHLFHRIIPDHGFEVGMSLECADLMDPRLVCVATVARVVGRLLKVHFDGWTDEYDQWLDCESADIYPVGWCVLVNHKLEGPPRVAHQQAPKPAPKPKIQRKRKPKKGAAGGKTPTDNNTQSVKSRTIALKTTPHLPKLSIKLELKPEHHNAAFYENNQPEEEGDEEDPDADGDGDGSTSHISEQSTTQSSSDLIAGSGSGSGSASLVTLATGSNKTNSSATNNKYIPRLADIDSSEPHLELVPDTWNVYDVSQFLRVNDCTAHCDTFSRNKIDGKRLLQLTKDDIMPLLGMKVGPALKISDLIAQLKCKVNPGRARSHKTNKSPFL.

The FCS-type zinc-finger motif lies at 322 to 357 (PIQKDGMAVCKRCGAIGVKHTFYTKSRRFCSMACAR). Zn(2+) is bound by residues cysteine 331, cysteine 334, cysteine 351, and cysteine 355. Disordered stretches follow at residues 371–399 (GDQA…QSQS) and 464–483 (DATA…SYLS). Polar residues predominate over residues 473–482 (EGASTPNSYL). 4 MBT repeats span residues 536 to 647 (YDWL…LIPP), 655 to 753 (KDWK…LAAP), 761 to 871 (LAGR…VTPP), and 879 to 975 (FTWE…LEGP). 2 disordered regions span residues 976 to 1024 (PRVA…IALK) and 1050 to 1092 (NNQP…AGSG). Residues 991–1000 (KIQRKRKPKK) are compositionally biased toward basic residues. The segment covering 1052–1068 (QPEEEGDEEDPDADGDG) has biased composition (acidic residues). Residues 1071 to 1082 (STSHISEQSTTQ) show a composition bias toward polar residues. The span at 1083 to 1092 (SSSDLIAGSG) shows a compositional bias: low complexity. The SAM domain occupies 1140 to 1203 (WNVYDVSQFL…SDLIAQLKCK (64 aa)).

In terms of assembly, interacts with pho as a component of the pho-repressive complex (PhoRC).

It localises to the nucleus. In terms of biological role, polycomb group (PcG) protein that binds to the Polycomb response elements (PREs) found in the regulatory regions of many genes. PcG proteins act by forming multiprotein complexes, which are required to maintain the transcriptionally repressive state of homeotic genes throughout development. PcG proteins are not required to initiate repression, but to maintain it during later stages of development. They probably act via the methylation of histones, rendering chromatin heritably changed in its expressibility. Necessary but not sufficient to recruit a functional PcG repressive complex that represses target genes, suggesting that the recruitment of the distinct PRC1 complex is also required to allow a subsequent repression. The chain is Polycomb protein Sfmbt from Drosophila melanogaster (Fruit fly).